The sequence spans 186 residues: Casparian strip membrane protein 3 (186 aa).

Residues 1 to 26 lie on the Cytoplasmic side of the membrane; sequence MKAGALELGEGSKTSIPRGGVNRGIS. A helical membrane pass occupies residues 27 to 47; sequence ILDFILRLITIIGTLGSAIAM. The Extracellular segment spans residues 48-74; the sequence is GTTNETLPFFTQFTQFRAEYDDLPTFT. A glycan (N-linked (GlcNAc...) asparagine) is linked at asparagine 51. Residues 75–95 form a helical membrane-spanning segment; that stretch reads FFVIANSIVSGYLVLSLPMSI. Residues 96 to 107 are Cytoplasmic-facing; sequence LHIVRSGARASR. The chain crosses the membrane as a helical span at residues 108–128; that stretch reads IVLIFFDTAMLALLTAAASAA. The Extracellular portion of the chain corresponds to 129–161; that stretch reads SAIVYLAHKGNAQANWFAICQQFKSFCERISGS. A helical transmembrane segment spans residues 162 to 182; that stretch reads LIGSFGGIILFILLVLLSAVA. Residues 183-186 are Cytoplasmic-facing; that stretch reads LSRC.

This sequence belongs to the Casparian strip membrane proteins (CASP) family. Homodimer and heterodimers.

Its subcellular location is the cell membrane. Functionally, regulates membrane-cell wall junctions and localized cell wall deposition. Required for establishment of the Casparian strip membrane domain (CSD) and the subsequent formation of Casparian strips, a cell wall modification of the root endodermis that determines an apoplastic barrier between the intraorganismal apoplasm and the extraorganismal apoplasm and prevents lateral diffusion. This Vitis vinifera (Grape) protein is Casparian strip membrane protein 3.